A 449-amino-acid chain; its full sequence is Ktr system potassium uptake protein D (449 aa).

The next 10 helical transmembrane spans lie at 17–37 (LIALYYFLAVTVAVILLSLPA), 46–66 (TFIDALFTAVSSVSVTGLTVV), 75–95 (IGIFILAFVLQFGGIGIMTLG), 133–153 (VLFLILWIEFFGGLILGTYFL), 194–214 (FVQFITMLLIIFGAIGFPVLV), 235–255 (ITTITFGSLVLFGAIGIFALE), 297–317 (LFFICALMFIGASPSSVGGGI), 355–375 (LVVTMMAILLVFGATLILTIT), 380–400 (LLELLFEVCSAFGTTGLSLGI), and 411–431 (VIMIVMFIGRIGILTFLYLIG).

It belongs to the TrkH potassium transport family. Ktr (TC 2.A.38.4) subfamily. As to quaternary structure, homodimer. Part of the KtrCD complex formed by an octameric catalytic ring of KtrC and a membrane associated dimer of KtrD forming a potassium channel.

The protein localises to the cell membrane. Its function is as follows. Integral membrane subunit of the KtrCD potassium uptake transporter. The 2 major potassium transporter complexes KtrAB and KtrCD confer resistance to both suddenly imposed and prolonged osmotic stress. This chain is Ktr system potassium uptake protein D (ktrD), found in Bacillus subtilis (strain 168).